The primary structure comprises 79 residues: Omega-phylotoxin-To1a (79 aa).

The N-terminal stretch at 1–21 (MKKTFCFILILVCIVLKSVNA) is a signal peptide. A propeptide spanning residues 22–38 (EEEDNFEESSLEMETAR) is cleaved from the precursor. Cystine bridges form between Cys39/Cys59, Cys46/Cys63, Cys58/Cys78, and Cys65/Cys76.

Expressed by the venom duct.

The protein resides in the secreted. Functionally, insect-specific toxin that probably acts as an inhibitor of presynaptic insect calcium channels, presumably Cav2 subtype. In vivo, induces immediate paralysis on insects, followed by death when high doses are injected. The chain is Omega-phylotoxin-To1a from Tibellus oblongus (Oblong running crab spider).